The chain runs to 505 residues: Trans-cinnamate 4-monooxygenase (505 aa).

A helical transmembrane segment spans residues 3 to 23; the sequence is LLLLEKTLLGSFVAVLVAILV. (E)-cinnamate is bound by residues 213-218 and alanine 306; that span reads RSRLAQ. Position 447 (cysteine 447) interacts with heme.

It belongs to the cytochrome P450 family. Heme serves as cofactor.

The protein localises to the membrane. It catalyses the reaction (E)-cinnamate + reduced [NADPH--hemoprotein reductase] + O2 = (E)-4-coumarate + oxidized [NADPH--hemoprotein reductase] + H2O + H(+). It participates in phenylpropanoid metabolism; trans-4-coumarate biosynthesis; trans-4-coumarate from trans-cinnamate: step 1/1. Catalyzes the first oxidative step of the phenylpropanoid pathway in higher plants by transforming trans-cinnamate into p-coumarate. The compounds formed by this pathway are essential components for lignification, pollination, and defense against ultraviolet light, predators and pathogens. This is Trans-cinnamate 4-monooxygenase (CYP73A16) from Populus kitakamiensis (Aspen).